The following is a 135-amino-acid chain: UPF0102 protein Mkms_2031 (135 aa).

It belongs to the UPF0102 family.

This is UPF0102 protein Mkms_2031 from Mycobacterium sp. (strain KMS).